We begin with the raw amino-acid sequence, 169 residues long: S-ribosylhomocysteine lyase (169 aa).

Fe cation is bound by residues H54, H58, and C128.

It belongs to the LuxS family. In terms of assembly, homodimer. Fe cation is required as a cofactor.

The enzyme catalyses S-(5-deoxy-D-ribos-5-yl)-L-homocysteine = (S)-4,5-dihydroxypentane-2,3-dione + L-homocysteine. Involved in the synthesis of autoinducer 2 (AI-2) which is secreted by bacteria and is used to communicate both the cell density and the metabolic potential of the environment. The regulation of gene expression in response to changes in cell density is called quorum sensing. Catalyzes the transformation of S-ribosylhomocysteine (RHC) to homocysteine (HC) and 4,5-dihydroxy-2,3-pentadione (DPD). The chain is S-ribosylhomocysteine lyase from Shewanella frigidimarina (strain NCIMB 400).